The chain runs to 387 residues: Homoserine O-succinyltransferase (387 aa).

The 310-residue stretch at 49-358 folds into the AB hydrolase-1 domain; that stretch reads NAILICHALS…DAEQGHDSFL (310 aa). Serine 156 acts as the Nucleophile in catalysis. Arginine 226 is a binding site for substrate. Active-site residues include aspartate 321 and histidine 354. Aspartate 355 provides a ligand contact to substrate.

It belongs to the AB hydrolase superfamily. MetX family. Homodimer.

The protein localises to the cytoplasm. It carries out the reaction L-homoserine + succinyl-CoA = O-succinyl-L-homoserine + CoA. It functions in the pathway amino-acid biosynthesis; L-methionine biosynthesis via de novo pathway; O-succinyl-L-homoserine from L-homoserine: step 1/1. With respect to regulation, requires MetW for activity. Its function is as follows. Transfers a succinyl group from succinyl-CoA to L-homoserine, forming succinyl-L-homoserine. This chain is Homoserine O-succinyltransferase, found in Acinetobacter baylyi (strain ATCC 33305 / BD413 / ADP1).